The primary structure comprises 402 residues: Argininosuccinate synthase (402 aa).

ATP-binding positions include 11–19 and alanine 39; that span reads AYSGGLDTS. The L-citrulline site is built by tyrosine 90 and serine 95. ATP is bound at residue glycine 120. Threonine 122, asparagine 126, and aspartate 127 together coordinate L-aspartate. Asparagine 126 is an L-citrulline binding site. L-citrulline contacts are provided by arginine 130, serine 179, serine 188, glutamate 264, and tyrosine 276.

The protein belongs to the argininosuccinate synthase family. Type 1 subfamily. In terms of assembly, homotetramer.

The protein localises to the cytoplasm. It carries out the reaction L-citrulline + L-aspartate + ATP = 2-(N(omega)-L-arginino)succinate + AMP + diphosphate + H(+). Its pathway is amino-acid biosynthesis; L-arginine biosynthesis; L-arginine from L-ornithine and carbamoyl phosphate: step 2/3. The chain is Argininosuccinate synthase from Roseiflexus castenholzii (strain DSM 13941 / HLO8).